A 466-amino-acid chain; its full sequence is ATP synthase subunit beta (466 aa).

152-159 (GGAGVGKT) is an ATP binding site.

It belongs to the ATPase alpha/beta chains family. As to quaternary structure, F-type ATPases have 2 components, CF(1) - the catalytic core - and CF(0) - the membrane proton channel. CF(1) has five subunits: alpha(3), beta(3), gamma(1), delta(1), epsilon(1). CF(0) has three main subunits: a(1), b(2) and c(9-12). The alpha and beta chains form an alternating ring which encloses part of the gamma chain. CF(1) is attached to CF(0) by a central stalk formed by the gamma and epsilon chains, while a peripheral stalk is formed by the delta and b chains.

It localises to the cell inner membrane. The catalysed reaction is ATP + H2O + 4 H(+)(in) = ADP + phosphate + 5 H(+)(out). Produces ATP from ADP in the presence of a proton gradient across the membrane. The catalytic sites are hosted primarily by the beta subunits. The sequence is that of ATP synthase subunit beta from Helicobacter acinonychis (strain Sheeba).